A 382-amino-acid chain; its full sequence is Na(+)/H(+) antiporter NhaA (382 aa).

10 helical membrane-spanning segments follow: residues 5–25 (INLL…ALAW), 42–62 (FGGV…FFGI), 88–108 (LATL…NAVI), 116–136 (GWGI…RLVF), 145–165 (FLLL…AVFY), 169–189 (VHPT…AAYI), 261–281 (IVVD…RFSS), 282–302 (VGTA…AGIL), 327–347 (TGLV…VAFV), and 353–373 (GAAK…VALG).

It belongs to the NhaA Na(+)/H(+) (TC 2.A.33) antiporter family.

Its subcellular location is the cell inner membrane. It carries out the reaction Na(+)(in) + 2 H(+)(out) = Na(+)(out) + 2 H(+)(in). Its function is as follows. Na(+)/H(+) antiporter that extrudes sodium in exchange for external protons. The protein is Na(+)/H(+) antiporter NhaA of Geobacter metallireducens (strain ATCC 53774 / DSM 7210 / GS-15).